Here is a 613-residue protein sequence, read N- to C-terminus: Dihydroxy-acid dehydratase (613 aa).

Aspartate 81 lines the Mg(2+) pocket. Cysteine 122 provides a ligand contact to [2Fe-2S] cluster. Residues aspartate 123 and lysine 124 each coordinate Mg(2+). Lysine 124 carries the post-translational modification N6-carboxylysine. Position 193 (cysteine 193) interacts with [2Fe-2S] cluster. Glutamate 489 is a binding site for Mg(2+). Serine 515 serves as the catalytic Proton acceptor.

This sequence belongs to the IlvD/Edd family. As to quaternary structure, homodimer. It depends on [2Fe-2S] cluster as a cofactor. Mg(2+) serves as cofactor.

The enzyme catalyses (2R)-2,3-dihydroxy-3-methylbutanoate = 3-methyl-2-oxobutanoate + H2O. It carries out the reaction (2R,3R)-2,3-dihydroxy-3-methylpentanoate = (S)-3-methyl-2-oxopentanoate + H2O. The protein operates within amino-acid biosynthesis; L-isoleucine biosynthesis; L-isoleucine from 2-oxobutanoate: step 3/4. Its pathway is amino-acid biosynthesis; L-valine biosynthesis; L-valine from pyruvate: step 3/4. In terms of biological role, functions in the biosynthesis of branched-chain amino acids. Catalyzes the dehydration of (2R,3R)-2,3-dihydroxy-3-methylpentanoate (2,3-dihydroxy-3-methylvalerate) into 2-oxo-3-methylpentanoate (2-oxo-3-methylvalerate) and of (2R)-2,3-dihydroxy-3-methylbutanoate (2,3-dihydroxyisovalerate) into 2-oxo-3-methylbutanoate (2-oxoisovalerate), the penultimate precursor to L-isoleucine and L-valine, respectively. This chain is Dihydroxy-acid dehydratase, found in Pseudomonas fluorescens (strain ATCC BAA-477 / NRRL B-23932 / Pf-5).